Consider the following 59-residue polypeptide: Light-harvesting protein B-800-850 alpha chain A (59 aa).

At 1–11 (MNQARIWTVVK) the chain is on the cytoplasmic side. The chain crosses the membrane as a helical span at residues 12-35 (PTVGLPLLLGSVTVIAILVHFAVL). H31 serves as a coordination point for a bacteriochlorophyll. Residues 36–59 (SHTTWFSKYWNGKAAAIESSVNVG) are Periplasmic-facing.

The protein belongs to the antenna complex alpha subunit family. The core complex is formed by different alpha and beta chains, binding bacteriochlorophyll molecules, and arranged most probably in tetrameric structures disposed around the reaction center. The non-pigmented gamma chains may constitute additional components.

It is found in the cell inner membrane. Antenna complexes are light-harvesting systems, which transfer the excitation energy to the reaction centers. The chain is Light-harvesting protein B-800-850 alpha chain A (pucAA) from Rhodopseudomonas palustris (strain ATCC BAA-98 / CGA009).